The primary structure comprises 179 residues: Large ribosomal subunit protein uL5 (179 aa).

This sequence belongs to the universal ribosomal protein uL5 family. As to quaternary structure, part of the 50S ribosomal subunit; part of the 5S rRNA/L5/L18/L25 subcomplex. Contacts the 5S rRNA and the P site tRNA. Forms a bridge to the 30S subunit in the 70S ribosome.

In terms of biological role, this is one of the proteins that bind and probably mediate the attachment of the 5S RNA into the large ribosomal subunit, where it forms part of the central protuberance. In the 70S ribosome it contacts protein S13 of the 30S subunit (bridge B1b), connecting the 2 subunits; this bridge is implicated in subunit movement. Contacts the P site tRNA; the 5S rRNA and some of its associated proteins might help stabilize positioning of ribosome-bound tRNAs. The protein is Large ribosomal subunit protein uL5 of Prochlorococcus marinus (strain MIT 9313).